The sequence spans 285 residues: Probable endonuclease 4 (285 aa).

Residues histidine 69, histidine 109, glutamate 145, aspartate 179, histidine 182, histidine 216, aspartate 229, histidine 231, and glutamate 261 each coordinate Zn(2+).

The protein belongs to the AP endonuclease 2 family. Requires Zn(2+) as cofactor.

The catalysed reaction is Endonucleolytic cleavage to 5'-phosphooligonucleotide end-products.. In terms of biological role, endonuclease IV plays a role in DNA repair. It cleaves phosphodiester bonds at apurinic or apyrimidinic (AP) sites, generating a 3'-hydroxyl group and a 5'-terminal sugar phosphate. In Salmonella arizonae (strain ATCC BAA-731 / CDC346-86 / RSK2980), this protein is Probable endonuclease 4.